Reading from the N-terminus, the 253-residue chain is Ribonuclease 3 (253 aa).

Residues 29–157 form the RNase III domain; the sequence is VDELQKTIGH…MLGAVFLDAG (129 aa). Mg(2+) is bound at residue Glu-70. Residue Asp-74 is part of the active site. 2 residues coordinate Mg(2+): Asp-143 and Glu-146. Glu-146 is an active-site residue. The DRBM domain maps to 184-253; the sequence is DYKSQLQELT…AARAVATLDK (70 aa).

Belongs to the ribonuclease III family. Homodimer. Mg(2+) serves as cofactor.

It localises to the cytoplasm. It carries out the reaction Endonucleolytic cleavage to 5'-phosphomonoester.. Functionally, digests double-stranded RNA. Involved in the processing of primary rRNA transcript to yield the immediate precursors to the large and small rRNAs (23S and 16S). Processes some mRNAs, and tRNAs when they are encoded in the rRNA operon. Processes pre-crRNA and tracrRNA of type II CRISPR loci if present in the organism. The chain is Ribonuclease 3 from Nitratidesulfovibrio vulgaris (strain ATCC 29579 / DSM 644 / CCUG 34227 / NCIMB 8303 / VKM B-1760 / Hildenborough) (Desulfovibrio vulgaris).